Consider the following 156-residue polypeptide: Large ribosomal subunit protein uL15 (156 aa).

A disordered region spans residues 29–48 (CGKGKTSGRGHKGQKARSGV). A compositionally biased stretch (basic residues) spans 34–43 (TSGRGHKGQK).

The protein belongs to the universal ribosomal protein uL15 family. In terms of assembly, part of the 50S ribosomal subunit.

Functionally, binds to the 23S rRNA. The polypeptide is Large ribosomal subunit protein uL15 (Ehrlichia chaffeensis (strain ATCC CRL-10679 / Arkansas)).